Consider the following 137-residue polypeptide: Small ribosomal subunit protein uS12 (137 aa).

Residue aspartate 102 is modified to 3-methylthioaspartic acid.

This sequence belongs to the universal ribosomal protein uS12 family. As to quaternary structure, part of the 30S ribosomal subunit. Contacts proteins S8 and S17. May interact with IF1 in the 30S initiation complex.

Its function is as follows. With S4 and S5 plays an important role in translational accuracy. Interacts with and stabilizes bases of the 16S rRNA that are involved in tRNA selection in the A site and with the mRNA backbone. Located at the interface of the 30S and 50S subunits, it traverses the body of the 30S subunit contacting proteins on the other side and probably holding the rRNA structure together. The combined cluster of proteins S8, S12 and S17 appears to hold together the shoulder and platform of the 30S subunit. This Mycoplasmopsis agalactiae (strain NCTC 10123 / CIP 59.7 / PG2) (Mycoplasma agalactiae) protein is Small ribosomal subunit protein uS12.